The sequence spans 58 residues: Large ribosomal subunit protein uL30 (58 aa).

This sequence belongs to the universal ribosomal protein uL30 family. Part of the 50S ribosomal subunit.

The sequence is that of Large ribosomal subunit protein uL30 from Azotobacter vinelandii (strain DJ / ATCC BAA-1303).